A 130-amino-acid chain; its full sequence is Small ribosomal subunit protein uS9 (130 aa).

This sequence belongs to the universal ribosomal protein uS9 family.

In Saccharophagus degradans (strain 2-40 / ATCC 43961 / DSM 17024), this protein is Small ribosomal subunit protein uS9.